A 36-amino-acid chain; its full sequence is Photosystem I reaction center subunit VIII (36 aa).

Residues 9–29 (ILVPLVGLVFPAITMVSLFLY) traverse the membrane as a helical segment.

It belongs to the PsaI family.

The protein resides in the plastid. Its subcellular location is the chloroplast thylakoid membrane. May help in the organization of the PsaL subunit. The polypeptide is Photosystem I reaction center subunit VIII (Zygnema circumcarinatum (Green alga)).